The following is a 404-amino-acid chain: MKKFIKILKVLSMAIVLSACNINGIFASNLNTTNEPQKTTVFNKNDNTWNAQYFRIPSLQTLADGTMLAFSDIRYNGAEDHAYIDIGAAKSTDNGQTWDYKTVMENDRIDSTFSRVMDSTTVVTDTGRIILIAGSWNKNGNWASSTTSLRSDWSVQMVYSDDNGETWSDKVDLTTNKARIKNQPSNTIGWLAGVGSGIVMSDGTIVMPIQIALRENNANNYYSSVIYSKDNGETWTMGNKVPDPKTSENMVIELDGALIMSSRNDGKNYRASYISYDMGSTWEVYDPLHNKISTGNGSGCQGSFIKVTAKDGHRLGFISAPKNTKGGYVRDNITVYMIDFDDLSKGIRELCSPYPEDGNSSGGGYSCLSFNDGKLSILYEANGNIEYKDLTDYYLSIENNKKLK.

A signal peptide spans 1 to 27 (MKKFIKILKVLSMAIVLSACNINGIFA). A substrate-binding site is contributed by Arg-55. Asp-80 functions as the Proton acceptor in the catalytic mechanism. 3 BNR repeats span residues 89–100 (AKSTDNGQTWDY), 158–169 (VYSDDNGETWSD), and 226–237 (IYSKDNGETWTM). Arg-263 serves as a coordination point for substrate. One copy of the BNR 4 repeat lies at 273–284 (YISYDMGSTWEV). The active-site Nucleophile is the Tyr-365.

Belongs to the glycosyl hydrolase 33 family. It is possible that the sialidase is cleaved in front of a cysteine within the leader peptide, forming a glyceride thioether bond which links the protein to the membrane. A second proteolytic cleavage releases the mature extracellular protein.

Its subcellular location is the secreted. It catalyses the reaction Hydrolysis of alpha-(2-&gt;3)-, alpha-(2-&gt;6)-, alpha-(2-&gt;8)- glycosidic linkages of terminal sialic acid residues in oligosaccharides, glycoproteins, glycolipids, colominic acid and synthetic substrates.. Its function is as follows. Sialidases have been suggested to be pathogenic factors in microbial infections. The protein is Sialidase of Paraclostridium sordellii (Clostridium sordellii).